A 136-amino-acid polypeptide reads, in one-letter code: C-type natriuretic peptide prohormone (136 aa).

The N-terminal stretch at 1–21 (MSGQTSFYCGLLLVLLIQAQA) is a signal peptide. A disulfide bridge connects residues Cys120 and Cys136.

It belongs to the natriuretic peptide family. CNP-115 is differentially processed to produce CNP-38 and CNP-39 in the heart and CNP-22 in the brain.

The protein resides in the secreted. Hormone which may be vasoactive and natriuretic. Has a cGMP-stimulating activity. The polypeptide is C-type natriuretic peptide prohormone (Triakis scyllium (Banded houndshark)).